A 784-amino-acid polypeptide reads, in one-letter code: Toll-like receptor 2 (784 aa).

A signal peptide spans 1–24; the sequence is MLHVLWTFWILVAMTDLSRKGCSA. At 25 to 588 the chain is on the extracellular side; that stretch reads QASLSCDAAG…RPSVLECHQT (564 aa). A disulfide bridge links Cys30 with Cys36. LRR repeat units lie at residues 54 to 77, 78 to 101, 102 to 125, 126 to 150, 151 to 175, 176 to 199, 200 to 223, 224 to 250, 251 to 278, 279 to 308, 309 to 337, 338 to 361, 362 to 388, 389 to 414, 415 to 437, 438 to 457, 458 to 478, 479 to 500, and 501 to 524; these read MKSL…GCVN, LRAL…SLSK, LEYL…PLSS, LKYL…NLTH, LQTL…GLTS, LDEL…SIQS, IHHL…TLSS, VGYL…MNSP, MKKL…YTPE, LLEV…ELGK, VETL…LLEK, VKRI…HLKS, LEFL…SWPS, LQTL…TLKN, LTAL…WPGK, MRFL…CIPQ, TLEV…FLPL, LREL…LFPV, and LLVM…SFPK. N-linked (GlcNAc...) asparagine glycans are attached at residues Asn114 and Asn147. Cysteines 353 and 382 form a disulfide. Asn414 carries an N-linked (GlcNAc...) asparagine glycan. A disulfide bridge connects residues Cys432 and Cys454. A glycan (N-linked (GlcNAc...) asparagine) is linked at Asn442. An LRRCT domain is found at 525 to 579; the sequence is LVSLEAGGNHFICSCELLSFTLEHPALVQVLAGWPDSYLCDSPSRLRGQRVQDAR. A helical membrane pass occupies residues 589–609; it reads LLVSGVCCALVLLILLIGGLC. Residues 610 to 784 are Cytoplasmic-facing; the sequence is HHFHGLWYLR…WVNLRTAIKS (175 aa). The region spanning 639–782 is the TIR domain; sequence ICYDAFVSYS…VFWVNLRTAI (144 aa). Residue Lys754 forms a Glycyl lysine isopeptide (Lys-Gly) (interchain with G-Cter in ubiquitin) linkage. Residues 761 to 778 carry the ATG16L1-binding motif motif; the sequence is YLEWPLDEGQQEVFWVNL.

This sequence belongs to the Toll-like receptor family. In terms of assembly, interacts with LY96, TLR1 and TLR6 (via extracellular domain). TLR2 seems to exist in heterodimers with either TLR1 or TLR6 before stimulation by the ligand. The heterodimers form bigger oligomers in response to their corresponding ligands as well as further heterotypic associations with other receptors such as CD14 and/or CD36. Binds MYD88 (via TIR domain). Interacts with TICAM1. Interacts with CNPY3. Interacts with ATG16L1. Interacts with PPP1R11. Interacts with TICAM2. Interacts with TIRAP. Ubiquitinated at Lys-754 by PPP1R11, leading to its degradation. Deubiquitinated by USP2. Post-translationally, glycosylation of Asn-442 is critical for secretion of the N-terminal ectodomain of TLR2.

The protein resides in the membrane. It localises to the cytoplasmic vesicle. The protein localises to the phagosome membrane. It is found in the membrane raft. In terms of biological role, cooperates with LY96 to mediate the innate immune response to bacterial lipoproteins and other microbial cell wall components. Cooperates with TLR1 or TLR6 to mediate the innate immune response to bacterial lipoproteins or lipopeptides. Acts via MYD88 and TRAF6, leading to NF-kappa-B activation, cytokine secretion and the inflammatory response. May also promote apoptosis in response to lipoproteins. Forms activation clusters composed of several receptors depending on the ligand, these clusters trigger signaling from the cell surface and subsequently are targeted to the Golgi in a lipid-raft dependent pathway. Forms the cluster TLR2:TLR6:CD14:CD36 in response to diacylated lipopeptides and TLR2:TLR1:CD14 in response to triacylated lipopeptides. The polypeptide is Toll-like receptor 2 (TLR2) (Cricetulus griseus (Chinese hamster)).